A 373-amino-acid chain; its full sequence is Filamin-binding LIM protein 1 (373 aa).

The segment at 1–70 (MASKPEKRVA…SPWTTPGRAA (70 aa)) is filamin-binding. 2 disordered regions span residues 41-119 (RPWE…PSEE) and 135-176 (QLHL…PVEK). Positions 104 to 114 (LPPPPPPPPVL) are enriched in pro residues. LIM zinc-binding domains follow at residues 181–242 (DICA…TLER), 243–300 (CGKC…RKFA), and 301–370 (PVCS…RSAA). Residues 276–373 (IGDESFALGS…HVKRSAAGCC (98 aa)) form an FERMT2-binding region.

As to quaternary structure, interacts with NKX2-5. Isoform 1 and isoform 3 interact with FERMT2, FLNA, FLNB and FLNC. Isoform 2 interacts with FLNB. As to expression, isoform 1 and isoform 3 are expressed in heart, kidney, lung, pancreas, placenta and platelets. Isoform 2 is expressed in brain, heart, kidney, lung, pancreas, placenta, skeletal muscle and platelets.

It localises to the cell junction. The protein localises to the focal adhesion. The protein resides in the cytoplasm. Its subcellular location is the cytoskeleton. It is found in the stress fiber. Its function is as follows. Serves as an anchoring site for cell-ECM adhesion proteins and filamin-containing actin filaments. Is implicated in cell shape modulation (spreading) and motility. May participate in the regulation of filamin-mediated cross-linking and stabilization of actin filaments. May also regulate the assembly of filamin-containing signaling complexes that control actin assembly. Promotes dissociation of FLNA from ITGB3 and ITGB7. Promotes activation of integrins and regulates integrin-mediated cell-cell adhesion. The sequence is that of Filamin-binding LIM protein 1 (FBLIM1) from Homo sapiens (Human).